The following is a 208-amino-acid chain: Uracil phosphoribosyltransferase (208 aa).

5-phospho-alpha-D-ribose 1-diphosphate-binding positions include arginine 78, arginine 103, and 130 to 138; that span reads DPMLATGGS. Residues isoleucine 193 and 198–200 contribute to the uracil site; that span reads GDA. 5-phospho-alpha-D-ribose 1-diphosphate is bound at residue aspartate 199.

Belongs to the UPRTase family. It depends on Mg(2+) as a cofactor.

It carries out the reaction UMP + diphosphate = 5-phospho-alpha-D-ribose 1-diphosphate + uracil. Its pathway is pyrimidine metabolism; UMP biosynthesis via salvage pathway; UMP from uracil: step 1/1. Its activity is regulated as follows. Allosterically activated by GTP. Catalyzes the conversion of uracil and 5-phospho-alpha-D-ribose 1-diphosphate (PRPP) to UMP and diphosphate. This chain is Uracil phosphoribosyltransferase, found in Actinobacillus pleuropneumoniae serotype 5b (strain L20).